The following is a 209-amino-acid chain: uncharacterized protein (209 aa).

The first 17 residues, 1–17 (MKRLVTGLLALSLFLAA), serve as a signal peptide directing secretion. Positions 17–105 (ACGQDSDQQK…SNNQANNNQK (89 aa)) are disordered. Residue Cys18 is the site of N-palmitoyl cysteine attachment. Cys18 carries the S-diacylglycerol cysteine lipid modification. The span at 23–70 (DQQKDSNKEKDDKAKTEQQDEKTNDSSKDKKDKKDDSKDVNKDNKDNS) shows a compositional bias: basic and acidic residues. Residues 71–105 (ANDNQQQSNSNATNNDQNQTNNNQSSNNQANNNQK) show a composition bias toward low complexity.

The protein resides in the cell membrane. This is an uncharacterized protein from Staphylococcus aureus (strain bovine RF122 / ET3-1).